Reading from the N-terminus, the 138-residue chain is Cysteine desulfuration protein SufE (138 aa).

Cysteine 51 functions as the Cysteine persulfide intermediate in the catalytic mechanism.

It belongs to the SufE family. In terms of assembly, homodimer. Interacts with SufS.

Its subcellular location is the cytoplasm. Its pathway is cofactor biosynthesis; iron-sulfur cluster biosynthesis. Its function is as follows. Participates in cysteine desulfuration mediated by SufS. Cysteine desulfuration mobilizes sulfur from L-cysteine to yield L-alanine and constitutes an essential step in sulfur metabolism for biosynthesis of a variety of sulfur-containing biomolecules. Functions as a sulfur acceptor for SufS, by mediating the direct transfer of the sulfur atom from the S-sulfanylcysteine of SufS, an intermediate product of cysteine desulfuration process. This is Cysteine desulfuration protein SufE from Shigella boydii serotype 18 (strain CDC 3083-94 / BS512).